We begin with the raw amino-acid sequence, 74 residues long: Guanine nucleotide-binding protein G(T) subunit gamma-T1 (74 aa).

At C71 the chain carries Cysteine methyl ester. Residue C71 is the site of S-farnesyl cysteine attachment. A propeptide spans 72–74 (VIS) (removed in mature form).

This sequence belongs to the G protein gamma family. G proteins are composed of 3 units, alpha, beta and gamma. Retinal rod outer segment.

Its subcellular location is the cell membrane. In terms of biological role, guanine nucleotide-binding proteins (G proteins) are involved as a modulator or transducer in various transmembrane signaling systems. The beta and gamma chains are required for the GTPase activity, for replacement of GDP by GTP, and for G protein-effector interaction. This Bos taurus (Bovine) protein is Guanine nucleotide-binding protein G(T) subunit gamma-T1 (GNGT1).